The primary structure comprises 431 residues: Trigger factor (431 aa).

Positions 164–249 (GDIAVIDFKG…IKEIKRKELP (86 aa)) constitute a PPIase FKBP-type domain.

This sequence belongs to the FKBP-type PPIase family. Tig subfamily.

The protein resides in the cytoplasm. The catalysed reaction is [protein]-peptidylproline (omega=180) = [protein]-peptidylproline (omega=0). In terms of biological role, involved in protein export. Acts as a chaperone by maintaining the newly synthesized protein in an open conformation. Functions as a peptidyl-prolyl cis-trans isomerase. The sequence is that of Trigger factor from Clostridium acetobutylicum (strain ATCC 824 / DSM 792 / JCM 1419 / IAM 19013 / LMG 5710 / NBRC 13948 / NRRL B-527 / VKM B-1787 / 2291 / W).